The following is an 83-amino-acid chain: Kappa-ctenitoxin-Pn1a (83 aa).

The signal sequence occupies residues 1-21 (MWFKIQVLVLAITLITLGIQA). Residues 22 to 37 (EPNSSPNNPLIVEEDR) constitute a propeptide that is removed on maturation. 4 cysteine pairs are disulfide-bonded: C40/C55, C47/C60, C54/C71, and C62/C69. Residues 78–83 (LFGFGK) constitute a propeptide that is removed on maturation.

This sequence belongs to the neurotoxin 02 (plectoxin) family. As to expression, expressed by the venom gland.

Its subcellular location is the secreted. In terms of biological role, antagonist of L-type calcium channels (Cav1/CACNA1). In GH3 neuroendocrinal cell line, it reversibly inhibits the A-type potassium current but does not block other potassium currents or calcium channels. Shows an important acetylcholine-mediated antiarrhythmogenic effect in isolated hearts. In vivo, causes paralysis in the posterior limbs and gradual decreases in movement and aggression during 24 hours at dose levels of 5 ug per mouse. The sequence is that of Kappa-ctenitoxin-Pn1a from Phoneutria nigriventer (Brazilian armed spider).